A 162-amino-acid chain; its full sequence is Probable chemoreceptor glutamine deamidase CheD (162 aa).

The protein belongs to the CheD family.

The catalysed reaction is L-glutaminyl-[protein] + H2O = L-glutamyl-[protein] + NH4(+). Probably deamidates glutamine residues to glutamate on methyl-accepting chemotaxis receptors (MCPs), playing an important role in chemotaxis. The chain is Probable chemoreceptor glutamine deamidase CheD from Clostridium novyi (strain NT).